The sequence spans 487 residues: Histamine H1 receptor (487 aa).

At 1–29 (MSLPNSSCLLEDKMCEGNKTTMASPQLMP) the chain is on the extracellular side. Asparagine 5 and asparagine 18 each carry an N-linked (GlcNAc...) asparagine glycan. A helical transmembrane segment spans residues 30–50 (LVVVLSTICLVTVGLNLLVLY). The Cytoplasmic segment spans residues 51–64 (AVRSERKLHTVGNL). The chain crosses the membrane as a helical span at residues 65-89 (YIVSLSVADLIVGAVVMPMNILYLL). The Extracellular portion of the chain corresponds to 90-97 (MSKWSLGR). The helical transmembrane segment at 98–123 (PLCLFWLSMDYVASTASIFSVFILCI) threads the bilayer. A disulfide bridge connects residues cysteine 100 and cysteine 180. Histamine is bound by residues aspartate 107 and threonine 112. The interval 107 to 112 (DYVAST) is important for agonist binding. The Cytoplasmic segment spans residues 124 to 144 (DRYRSVQQPLRYLKYRTKTRA). Phosphothreonine occurs at positions 140 and 142. Residues 145–164 (SATILGAWFLSFLWVIPILG) form a helical membrane-spanning segment. At 165 to 188 (WNHFMQQTSVRREDKCETDFYDVT) the chain is on the extracellular side. A helical transmembrane segment spans residues 189–211 (WFKVMTAIINFYLPTLLMLWFYA). Asparagine 198 contacts histamine. Topologically, residues 212 to 416 (KIYKAVRQHC…MNRERKAAKQ (205 aa)) are cytoplasmic. Position 230 is a phosphoserine (serine 230). Over residues 238-261 (KLRPENPKGDAKKPGKESPWEVLK) the composition is skewed to basic and acidic residues. The disordered stretch occupies residues 238–291 (KLRPENPKGDAKKPGKESPWEVLKRKPKDAGGGSVLKSPSQTPKEMKSPVVFSQ). Threonine 279 carries the post-translational modification Phosphothreonine. Phosphoserine is present on residues serine 344 and serine 347. The disordered stretch occupies residues 345-379 (EISEDQMLGDSQSFSRTDSDTTTETAPGKGKLRSG). Over residues 353-369 (GDSQSFSRTDSDTTTET) the composition is skewed to polar residues. A phosphoserine mark is found at serine 380, serine 396, and serine 398. The helical transmembrane segment at 417-440 (LGFIMAAFILCWIPYFIFFMVIAF) threads the bilayer. The interval 424-428 (FILCW) is important for agonist binding. Position 431 (tyrosine 431) interacts with histamine. Cysteine 441 and cysteine 444 are joined by a disulfide. The Extracellular segment spans residues 441–446 (CKNCCN). The helical transmembrane segment at 447 to 469 (EHLHMFTIWLGYINSTLNPLIYP) threads the bilayer. Residues 470–487 (LCNENFKKTFKRILHIRS) are Cytoplasmic-facing.

This sequence belongs to the G-protein coupled receptor 1 family. Post-translationally, phosphorylation at sites in the second and third cytoplasmic loops independently contribute to agonist-induced receptor down-regulation.

The protein resides in the cell membrane. G-protein-coupled receptor for histamine, a biogenic amine that functions as an immune modulator and a neurotransmitter. Through the H1 receptor, histamine mediates the contraction of smooth muscles and increases capillary permeability due to contraction of terminal venules. Also mediates neurotransmission in the central nervous system and thereby regulates circadian rhythms, emotional and locomotor activities as well as cognitive functions. This chain is Histamine H1 receptor, found in Homo sapiens (Human).